An 81-amino-acid polypeptide reads, in one-letter code: uncharacterized protein (81 aa).

This sequence belongs to the ycf70 family.

It localises to the plastid. Its subcellular location is the chloroplast. This is an uncharacterized protein from Saccharum officinarum (Sugarcane).